The chain runs to 463 residues: Ribulose bisphosphate carboxylase large chain (463 aa).

An N6,N6,N6-trimethyllysine modification is found at Lys-5. Substrate-binding residues include Asn-114 and Thr-164. The Proton acceptor role is filled by Lys-166. Position 168 (Lys-168) interacts with substrate. Mg(2+)-binding residues include Lys-192, Asp-194, and Glu-195. Lys-192 is subject to N6-carboxylysine. The Proton acceptor role is filled by His-285. Positions 286, 318, and 370 each coordinate substrate.

The protein belongs to the RuBisCO large chain family. Type I subfamily. Heterohexadecamer of 8 large chains and 8 small chains; disulfide-linked. The disulfide link is formed within the large subunit homodimers. Mg(2+) is required as a cofactor. In terms of processing, the disulfide bond which can form in the large chain dimeric partners within the hexadecamer appears to be associated with oxidative stress and protein turnover.

The protein localises to the plastid. The protein resides in the chloroplast. It catalyses the reaction 2 (2R)-3-phosphoglycerate + 2 H(+) = D-ribulose 1,5-bisphosphate + CO2 + H2O. The enzyme catalyses D-ribulose 1,5-bisphosphate + O2 = 2-phosphoglycolate + (2R)-3-phosphoglycerate + 2 H(+). Its function is as follows. RuBisCO catalyzes two reactions: the carboxylation of D-ribulose 1,5-bisphosphate, the primary event in carbon dioxide fixation, as well as the oxidative fragmentation of the pentose substrate in the photorespiration process. Both reactions occur simultaneously and in competition at the same active site. This Pelargonium grandiflorum (Geranium) protein is Ribulose bisphosphate carboxylase large chain.